The following is a 44-amino-acid chain: Protein PsbN (44 aa).

A helical membrane pass occupies residues Phe6–Ile26.

This sequence belongs to the PsbN family.

It is found in the plastid. The protein localises to the chloroplast thylakoid membrane. Its function is as follows. May play a role in photosystem I and II biogenesis. The chain is Protein PsbN from Oedogonium cardiacum (Filamentous green alga).